Reading from the N-terminus, the 131-residue chain is Leptin receptor gene-related protein (131 aa).

The next 4 helical transmembrane spans lie at 7-27 (LVAL…GCAL), 32-52 (VYWP…HFIA), 69-89 (LAYF…VILA), and 100-120 (GLVL…FLVF).

The protein belongs to the OB-RGRP/VPS55 family. In terms of assembly, interacts with LEPR. Interacts with RAB13.

The protein resides in the golgi apparatus membrane. It is found in the endosome membrane. Its function is as follows. Negatively regulates leptin receptor (LEPR) cell surface expression, and thus decreases response to leptin/LEP. Negatively regulates growth hormone (GH) receptor cell surface expression in liver. May play a role in liver resistance to GH during periods of reduced nutrient availability. The sequence is that of Leptin receptor gene-related protein (LEPROT) from Sus scrofa (Pig).